A 308-amino-acid chain; its full sequence is UPF0026 protein HP_0117 (308 aa).

The Radical SAM core domain occupies 18 to 248 (FGKSLGVDLS…SLPKRSITQA (231 aa)). [4Fe-4S] cluster is bound by residues Cys-33, Cys-37, and Cys-40.

The protein belongs to the UPF0026 family. It depends on [4Fe-4S] cluster as a cofactor.

This chain is UPF0026 protein HP_0117, found in Helicobacter pylori (strain ATCC 700392 / 26695) (Campylobacter pylori).